Reading from the N-terminus, the 101-residue chain is Large ribosomal subunit protein uL24 (101 aa).

The protein belongs to the universal ribosomal protein uL24 family. As to quaternary structure, part of the 50S ribosomal subunit.

One of two assembly initiator proteins, it binds directly to the 5'-end of the 23S rRNA, where it nucleates assembly of the 50S subunit. In terms of biological role, one of the proteins that surrounds the polypeptide exit tunnel on the outside of the subunit. This chain is Large ribosomal subunit protein uL24, found in Dinoroseobacter shibae (strain DSM 16493 / NCIMB 14021 / DFL 12).